The chain runs to 618 residues: Structural protein ORF618 (618 aa).

Residues 570 to 598 (ILEAKRQIEDRAKGLSKNLDNTVTEIMNA) are a coiled coil.

It is found in the virion. In Acidianus two-tailed virus (ATV), this protein is Structural protein ORF618.